We begin with the raw amino-acid sequence, 489 residues long: Ribulose bisphosphate carboxylase large chain 2 (489 aa).

N128 and T178 together coordinate substrate. The Proton acceptor role is filled by K180. K182 contributes to the substrate binding site. Mg(2+) is bound by residues K206, D208, and E209. K206 carries the N6-carboxylysine modification. H298 functions as the Proton acceptor in the catalytic mechanism. Substrate is bound by residues R299, H331, and S383.

This sequence belongs to the RuBisCO large chain family. Type I subfamily. As to quaternary structure, heterohexadecamer of 8 large chains and 8 small chains. The cofactor is Mg(2+).

The catalysed reaction is 2 (2R)-3-phosphoglycerate + 2 H(+) = D-ribulose 1,5-bisphosphate + CO2 + H2O. It carries out the reaction D-ribulose 1,5-bisphosphate + O2 = 2-phosphoglycolate + (2R)-3-phosphoglycerate + 2 H(+). Its function is as follows. RuBisCO catalyzes two reactions: the carboxylation of D-ribulose 1,5-bisphosphate, the primary event in carbon dioxide fixation, as well as the oxidative fragmentation of the pentose substrate. Both reactions occur simultaneously and in competition at the same active site. This chain is Ribulose bisphosphate carboxylase large chain 2, found in Nitrobacter winogradskyi (strain ATCC 25391 / DSM 10237 / CIP 104748 / NCIMB 11846 / Nb-255).